Consider the following 209-residue polypeptide: NADH-quinone oxidoreductase subunit C (209 aa).

This sequence belongs to the complex I 30 kDa subunit family. NDH-1 is composed of 14 different subunits. Subunits NuoB, C, D, E, F, and G constitute the peripheral sector of the complex.

The protein localises to the cell inner membrane. The enzyme catalyses a quinone + NADH + 5 H(+)(in) = a quinol + NAD(+) + 4 H(+)(out). Its function is as follows. NDH-1 shuttles electrons from NADH, via FMN and iron-sulfur (Fe-S) centers, to quinones in the respiratory chain. The immediate electron acceptor for the enzyme in this species is believed to be ubiquinone. Couples the redox reaction to proton translocation (for every two electrons transferred, four hydrogen ions are translocated across the cytoplasmic membrane), and thus conserves the redox energy in a proton gradient. The polypeptide is NADH-quinone oxidoreductase subunit C (Phenylobacterium zucineum (strain HLK1)).